Consider the following 410-residue polypeptide: MKQNYILSIILCYLLANVHSAPAIITVWQTVTDAQVAAGPTAAAPAANANANVQQAAAASAPAPAPVASPAAPAPASSAPQSSTPSSSGWLSNLFNSFFGGSDSDSSSGSDTASAAPASTSPQSSSSSSSSSGNSFLSFLSGLFGSGSSSSTPSSISQQQQQQQGSPASGSNSPNSAQPDAAAASNPVPQSNNNQGSGLGSGFGSGFGSGSGSDSDSGSGLPSASSSTIIQQQPSSSNIGSSSTSSSSSSSSSSSSSSSSSGDIYAAISQCDGIDASFASEILDAHNKYRAQHKVGDLSWDVDTYNYAKNNADNYDCSGVLTHTHGKFGENLAAGFKDGASTVAAWVDEPISYSDASFVYNHFTQVIWKGSTKVGCAYKDCRKSNWGLYVVCEYDPYGNVIGQGSKNVFP.

Positions 1–20 are cleaved as a signal peptide; that stretch reads MKQNYILSIILCYLLANVHS. 3 disordered regions span residues 64-86, 102-132, and 148-260; these read PAPV…STPS, SDSD…SSSS, and SSSS…SSSS. Residues 148-179 are compositionally biased toward low complexity; it reads SSSSTPSSISQQQQQQQGSPASGSNSPNSAQP. Residues 197–211 show a composition bias toward gly residues; that stretch reads SGLGSGFGSGFGSGS. Residues 212–260 show a composition bias toward low complexity; it reads GSDSDSGSGLPSASSSTIIQQQPSSSNIGSSSTSSSSSSSSSSSSSSSS. One can recognise an SCP domain in the interval 283–394; that stretch reads LDAHNKYRAQ…NWGLYVVCEY (112 aa).

Belongs to the CRISP family.

It localises to the secreted. In terms of biological role, secreted protein that acts as a virulence factor during infections. The polypeptide is Secreted protein PRY1 (PRY1) (Candida albicans (strain SC5314 / ATCC MYA-2876) (Yeast)).